The chain runs to 223 residues: Ribonuclease HII (223 aa).

The RNase H type-2 domain occupies 32-223 (LYIAGVDEVG…LKKRYRDYMS (192 aa)). The a divalent metal cation site is built by Asp38, Glu39, and Asp130.

Belongs to the RNase HII family. It depends on Mn(2+) as a cofactor. Mg(2+) is required as a cofactor.

Its subcellular location is the cytoplasm. It carries out the reaction Endonucleolytic cleavage to 5'-phosphomonoester.. Its function is as follows. Endonuclease that specifically degrades the RNA of RNA-DNA hybrids. The polypeptide is Ribonuclease HII (Bartonella henselae (strain ATCC 49882 / DSM 28221 / CCUG 30454 / Houston 1) (Rochalimaea henselae)).